A 460-amino-acid chain; its full sequence is MALKTQLLWSFVVVFVVSFSTTSCSGSSFQEVNALHSYVDHVDDKESGYNSRAYPSYTDTIEGLKVMELIRPRTQLFSSRKLNTITGGIATSSAPAKTISVDDFGAKGNGADDTQAFVKAWKAACSSSGAMVLVVPQKNYLVRPIEFSGPCKSQLTLQIYGTIEASEDRSIYKDIDHWLIFDNVQNLLVVGPGTINGNGNIWWKNSCKIKPQPPCGTYAPTAVTFNRCNNLVVKNLNIQDAQQIHVIFQNCINVQASCLTVTAPEDSPNTDGIHVTNTQNITISSSVIGTGDDCISIVSGSQRVQATDITCGPGHGISIGSLGEDGSEDHVSGVFVNGAKLSGTSNGLRIKTWKGGSGSATNIVFQNVQMNDVTNPIIIDQNYCDHKTKDCKQQKSAVQVKNVLYQNIRGTSASGDAITLNCSQSVPCQGIVLQSVQLQNGRAECNNVQPAYKGVVSPRC.

The N-terminal stretch at 1-26 is a signal peptide; the sequence is MALKTQLLWSFVVVFVVSFSTTSCSG. Asn-280 carries an N-linked (GlcNAc...) asparagine glycan. The active-site Proton donor is Asp-292. The active site involves His-315. Asn-421 is a glycosylation site (N-linked (GlcNAc...) asparagine).

This sequence belongs to the glycosyl hydrolase 28 family.

It is found in the secreted. Its subcellular location is the cell wall. It carries out the reaction (1,4-alpha-D-galacturonosyl)n+m + H2O = (1,4-alpha-D-galacturonosyl)n + (1,4-alpha-D-galacturonosyl)m.. Functionally, acts in concert with the pectinesterase, in the ripening process. Is involved in cell wall metabolism, specifically in polyuronide degradation. In Malus domestica (Apple), this protein is Polygalacturonase.